The following is a 172-amino-acid chain: Type IV secretion system putative outer membrane lipoprotein BAB2_0057 (172 aa).

The signal sequence occupies residues 1-15 (MRTLVMVACAVSLAA). Cys-16 carries the N-palmitoyl cysteine lipid modification. Cys-16 is lipidated: S-diacylglycerol cysteine. The region spanning 58–172 (WPARPPKQTV…RRVDIEILRK (115 aa)) is the OmpA-like domain.

It is found in the cell outer membrane. Its function is as follows. The virB operon is essential for intracellular survival and is not involved in the invasion process. Constitutes a major determinant of virulence in mice. This protein is essential for pathogenesis in mice but is not required for intracellular survival. The polypeptide is Type IV secretion system putative outer membrane lipoprotein BAB2_0057 (Brucella abortus (strain 2308)).